We begin with the raw amino-acid sequence, 3856 residues long: Hybrid PKS-NRPS synthetase traA (3856 aa).

Residues 6–438 enclose the Ketosynthase family 3 (KS3) domain; it reads PEPIAIVGSG…GTNGHAILEE (433 aa). Residues C179, H318, and H358 each act as for beta-ketoacyl synthase activity in the active site. Residues 554-885 are malonyl-CoA:ACP transacylase (MAT) domain; the sequence is IFTGQGAQWA…FSDALGFVWT (332 aa). Residues 943–1081 are N-terminal hotdog fold; the sequence is HELLGVPSPN…GKVTVIYGTP (139 aa). The interval 943–1247 is dehydratase (DH) domain; it reads HELLGVPSPN…LSMKPFSPAT (305 aa). The PKS/mFAS DH domain maps to 943–1249; that stretch reads HELLGVPSPN…MKPFSPATAD (307 aa). H975 functions as the Proton acceptor; for dehydratase activity in the catalytic mechanism. The C-terminal hotdog fold stretch occupies residues 1096–1249; the sequence is MVDIQAEQFY…MKPFSPATAD (154 aa). D1156 acts as the Proton donor; for dehydratase activity in catalysis. The segment at 1290–1456 is methyltransferase (MT) domain; the sequence is LACVAQQIVH…RKAGFSGIDS (167 aa). Residues 1984–2158 are ketoreductase (KR) domain; that stretch reads TYVLVGLSGR…ATSLDIGSIV (175 aa). One can recognise a Carrier 1 domain in the interval 2266–2347; sequence ADALEILKEL…TLCQQALEKL (82 aa). S2307 carries the post-translational modification O-(pantetheine 4'-phosphoryl)serine. Residues 2351-2422 form a disordered region; sequence ILPNVESGGP…SSTPATVLSN (72 aa). Low complexity-rich tracts occupy residues 2357-2369 and 2399-2418; these read SGGP…SKPT and TTSP…TPAT. The segment at 2446 to 2884 is condensation (C) domain; sequence VKTELVSFQQ…FALFSDKELK (439 aa). Positions 2910 to 3310 are adenylation (A) domain; the sequence is QIAKENDDKV…GAMVFHNRIA (401 aa). The tract at residues 3403-3429 is disordered; that stretch reads SKTDRKALKELPLPQRSNHDTGDNTES. The region spanning 3428 to 3507 is the Carrier 2 domain; it reads ESLTETMLEL…DMTQKIEESL (80 aa). S3467 is modified (O-(pantetheine 4'-phosphoryl)serine). The segment at 3544–3768 is reductase (R) domain; that stretch reads VTGSGGFLGK…EMTPIHSAAS (225 aa).

The protein in the C-terminal section; belongs to the NRP synthetase family.

The protein operates within secondary metabolite biosynthesis. Hybrid PKS-NRPS synthetase; part of the tra gene cluster that produces terrestric acid. The clavatol biosynthesis cluster cla and the terrestric acid cluster tra are both involved in the production of peniphenones and penilactones. The non-reducing PKS claF is responsible for the formation of clavatol from successive condensations of 3 malonyl-CoA units, presumably with a simple acetyl-CoA starter unit, and 2 methylation steps. The esterase claE probably collaborates with claF by catalyzing the hydrolysis of ACP-bound acyl intermediates to free the ACP from stalled intermediates. The clavatol oxidase claD then converts clavatol to hydroxyclavatol. Spontaneous dehydration of hydroxyclavatol leads to the accumulation of the highly active ortho-quinone methide. On the other hand, the PKS-NRPS hybrid traA is involved in the formation of crustosic acid, with the help of traB and traD. The polyketide synthase module (PKS) of traA is responsible for the synthesis of the polyketide backbone via the condensation of an acetyl-CoA starter unit with 3 malonyl-CoA units. The downstream nonribosomal peptide synthetase (NRPS) module then amidates the carboxyl end of the polyketide with L-malic acid. Because traA lacks a designated enoylreductase (ER) domain, the required activity is provided the enoyl reductase traG. Crustosic acid undergoes decarboxylation and isomerization to the terrestric acid, catalyzed by the 2-oxoglutarate-dependent dioxygenase traH. Both acids are further converted to the 2 gamma-butyrolactones (R)-5-methyltetronic acid and (S)-5-carboxylmethyltetronic acid, with involvement of the cytochrome P450 monooxygenase claJ. Spontaneous addition of the methide to these gamma-butyrolactones leads to peniphenone D and penilactone D, which undergo again stereospecific attacking by methide to give penilactones A and B. This Penicillium crustosum (Blue mold fungus) protein is Hybrid PKS-NRPS synthetase traA.